A 311-amino-acid polypeptide reads, in one-letter code: Glycerol-3-phosphate dehydrogenase [NAD(P)+] (311 aa).

The NADPH site is built by W12, R31, R32, and K96. Residues K96, G124, and S126 each contribute to the sn-glycerol 3-phosphate site. NADPH is bound at residue A128. The sn-glycerol 3-phosphate site is built by K178, D231, S241, R242, and N243. The active-site Proton acceptor is K178. Residue R242 participates in NADPH binding. Residues V266 and E268 each coordinate NADPH.

Belongs to the NAD-dependent glycerol-3-phosphate dehydrogenase family.

Its subcellular location is the cytoplasm. The enzyme catalyses sn-glycerol 3-phosphate + NAD(+) = dihydroxyacetone phosphate + NADH + H(+). The catalysed reaction is sn-glycerol 3-phosphate + NADP(+) = dihydroxyacetone phosphate + NADPH + H(+). It functions in the pathway membrane lipid metabolism; glycerophospholipid metabolism. Catalyzes the reduction of the glycolytic intermediate dihydroxyacetone phosphate (DHAP) to sn-glycerol 3-phosphate (G3P), the key precursor for phospholipid synthesis. The sequence is that of Glycerol-3-phosphate dehydrogenase [NAD(P)+] from Helicobacter hepaticus (strain ATCC 51449 / 3B1).